The primary structure comprises 158 residues: Biotin carboxyl carrier protein of acetyl-CoA carboxylase (158 aa).

The 77-residue stretch at 81–157 folds into the Biotinyl-binding domain; it reads YATIVSPMVG…DCGQALMKVE (77 aa). Lys-123 carries the N6-biotinyllysine modification.

The protein resides in the plastid. It is found in the chloroplast. It participates in lipid metabolism; fatty acid biosynthesis. In terms of biological role, this protein is a component of the acetyl coenzyme A carboxylase complex; first, biotin carboxylase catalyzes the carboxylation of the carrier protein and then the transcarboxylase transfers the carboxyl group to form malonyl-CoA. This is Biotin carboxyl carrier protein of acetyl-CoA carboxylase (accB) from Pyropia yezoensis (Susabi-nori).